A 319-amino-acid polypeptide reads, in one-letter code: Acetyl-coenzyme A carboxylase carboxyl transferase subunit alpha (319 aa).

The CoA carboxyltransferase C-terminal domain occupies 35–292 (EISKLMRRLV…KKTIAEALAE (258 aa)).

It belongs to the AccA family. Acetyl-CoA carboxylase is a heterohexamer composed of biotin carboxyl carrier protein (AccB), biotin carboxylase (AccC) and two subunits each of ACCase subunit alpha (AccA) and ACCase subunit beta (AccD).

Its subcellular location is the cytoplasm. It catalyses the reaction N(6)-carboxybiotinyl-L-lysyl-[protein] + acetyl-CoA = N(6)-biotinyl-L-lysyl-[protein] + malonyl-CoA. It functions in the pathway lipid metabolism; malonyl-CoA biosynthesis; malonyl-CoA from acetyl-CoA: step 1/1. Functionally, component of the acetyl coenzyme A carboxylase (ACC) complex. First, biotin carboxylase catalyzes the carboxylation of biotin on its carrier protein (BCCP) and then the CO(2) group is transferred by the carboxyltransferase to acetyl-CoA to form malonyl-CoA. This chain is Acetyl-coenzyme A carboxylase carboxyl transferase subunit alpha, found in Desulfitobacterium hafniense (strain DSM 10664 / DCB-2).